Here is a 282-residue protein sequence, read N- to C-terminus: Bis(5'-nucleosyl)-tetraphosphatase, symmetrical (282 aa).

The protein belongs to the Ap4A hydrolase family.

The enzyme catalyses P(1),P(4)-bis(5'-adenosyl) tetraphosphate + H2O = 2 ADP + 2 H(+). Hydrolyzes diadenosine 5',5'''-P1,P4-tetraphosphate to yield ADP. The polypeptide is Bis(5'-nucleosyl)-tetraphosphatase, symmetrical (Burkholderia thailandensis (strain ATCC 700388 / DSM 13276 / CCUG 48851 / CIP 106301 / E264)).